The following is a 310-amino-acid chain: tRNA-cytidine(32) 2-sulfurtransferase (310 aa).

A PP-loop motif motif is present at residues 44–49; that stretch reads SGGKDS. Cys119, Cys122, and Cys210 together coordinate [4Fe-4S] cluster.

Belongs to the TtcA family. As to quaternary structure, homodimer. It depends on Mg(2+) as a cofactor. Requires [4Fe-4S] cluster as cofactor.

The protein resides in the cytoplasm. The enzyme catalyses cytidine(32) in tRNA + S-sulfanyl-L-cysteinyl-[cysteine desulfurase] + AH2 + ATP = 2-thiocytidine(32) in tRNA + L-cysteinyl-[cysteine desulfurase] + A + AMP + diphosphate + H(+). The protein operates within tRNA modification. In terms of biological role, catalyzes the ATP-dependent 2-thiolation of cytidine in position 32 of tRNA, to form 2-thiocytidine (s(2)C32). The sulfur atoms are provided by the cysteine/cysteine desulfurase (IscS) system. This chain is tRNA-cytidine(32) 2-sulfurtransferase, found in Saccharophagus degradans (strain 2-40 / ATCC 43961 / DSM 17024).